Reading from the N-terminus, the 118-residue chain is Large ribosomal subunit protein uL18 (118 aa).

Positions 1 to 20 (MISKPDKNKKRQRRHARVRS) are disordered. Residues 7-20 (KNKKRQRRHARVRS) are compositionally biased toward basic residues.

Belongs to the universal ribosomal protein uL18 family. In terms of assembly, part of the 50S ribosomal subunit; part of the 5S rRNA/L5/L18/L25 subcomplex. Contacts the 5S and 23S rRNAs.

In terms of biological role, this is one of the proteins that bind and probably mediate the attachment of the 5S RNA into the large ribosomal subunit, where it forms part of the central protuberance. The sequence is that of Large ribosomal subunit protein uL18 from Pediococcus pentosaceus (strain ATCC 25745 / CCUG 21536 / LMG 10740 / 183-1w).